A 378-amino-acid polypeptide reads, in one-letter code: Putative UDP-N-acetylglucosamine 2-epimerase (378 aa).

Belongs to the UDP-N-acetylglucosamine 2-epimerase family.

Its subcellular location is the cytoplasm. The catalysed reaction is UDP-N-acetyl-alpha-D-glucosamine = UDP-N-acetyl-alpha-D-mannosamine. The chain is Putative UDP-N-acetylglucosamine 2-epimerase from Thermotoga maritima (strain ATCC 43589 / DSM 3109 / JCM 10099 / NBRC 100826 / MSB8).